We begin with the raw amino-acid sequence, 1039 residues long: Multidrug resistance protein MdtB (1039 aa).

A run of 12 helical transmembrane segments spans residues 16 to 36, 342 to 362, 373 to 393, 396 to 416, 440 to 460, 472 to 492, 537 to 557, 863 to 883, 888 to 908, 911 to 931, 968 to 988, and 1002 to 1022; these read FILR…AGII, DVQF…YVFL, VAVP…GFSI, LTLM…IVVI, IGFT…PLLF, FAVT…TLTP, WLTL…YLLI, LGGT…VLGV, FIHP…ALLA, MAGS…IGIV, ILMT…STGV, and GGLV…YLLF.

It belongs to the resistance-nodulation-cell division (RND) (TC 2.A.6) family. MdtB subfamily. Part of a tripartite efflux system composed of MdtA, MdtB and MdtC. MdtB forms a heteromultimer with MdtC.

Its subcellular location is the cell inner membrane. The protein is Multidrug resistance protein MdtB of Serratia proteamaculans (strain 568).